The sequence spans 310 residues: Thioredoxin reductase (310 aa).

34-41 (NGMQPGGQ) is an FAD binding site. The cysteines at positions 135 and 138 are disulfide-linked. 281–290 (DVQDKIYRQA) lines the FAD pocket.

Belongs to the class-II pyridine nucleotide-disulfide oxidoreductase family. In terms of assembly, homodimer. Requires FAD as cofactor.

Its subcellular location is the cytoplasm. The catalysed reaction is [thioredoxin]-dithiol + NADP(+) = [thioredoxin]-disulfide + NADPH + H(+). This Rickettsia typhi (strain ATCC VR-144 / Wilmington) protein is Thioredoxin reductase (trxB).